Consider the following 919-residue polypeptide: Exostosin-like 3 (919 aa).

Residues 1-30 lie on the Cytoplasmic side of the membrane; sequence MTGYTMLRNGGAGNGGQTCMLRWSNRIRLT. A required for interaction with REG3A region spans residues 1–140; that stretch reads MTGYTMLRNG…LKNVISQTEH (140 aa). The chain crosses the membrane as a helical; Signal-anchor for type II membrane protein span at residues 31-51; it reads WLSFTLFVILVFFPLIAHYYL. Residues 52 to 919 are Lumenal-facing; that stretch reads TTLDEADEAG…HDKTKCFKFI (868 aa). Cystine bridges form between Cys-177/Cys-182 and Cys-188/Cys-236. A glycan (N-linked (GlcNAc...) asparagine) is linked at Asn-290. Ser-362 carries the post-translational modification Phosphoserine. A disulfide bond links Cys-400 and Cys-415. N-linked (GlcNAc...) asparagine glycosylation occurs at Asn-592. The UDP-N-acetyl-alpha-D-glucosamine site is built by Leu-668, Arg-672, Asn-697, Asn-723, Arg-728, Asp-744, Asp-745, and Asp-746. Mn(2+) is bound at residue Asp-746. Residue Asn-790 is glycosylated (N-linked (GlcNAc...) asparagine). Cys-831 and Cys-879 are disulfide-bonded. UDP-N-acetyl-alpha-D-glucosamine is bound by residues Glu-832, Asp-833, and Arg-876. Residue Asp-833 is part of the active site.

The protein belongs to the glycosyltransferase 47 family. As to quaternary structure, homodimer; disulfide-linked. Interacts with REG3A. Mn(2+) is required as a cofactor. As to expression, ubiquitous. Expressed in keratinocytes. Expressed in pancreas.

Its subcellular location is the endoplasmic reticulum membrane. The protein localises to the golgi apparatus. The protein resides in the cell membrane. It localises to the nucleus. The enzyme catalyses 3-O-(beta-D-GlcA-(1-&gt;3)-beta-D-Gal-(1-&gt;3)-beta-D-Gal-(1-&gt;4)-beta-D-Xyl)-L-seryl-[protein] + UDP-N-acetyl-alpha-D-glucosamine = 3-O-(alpha-D-GlcNAc-(1-&gt;4)-beta-D-GlcA-(1-&gt;3)-beta-D-Gal-(1-&gt;3)-beta-D-Gal-(1-&gt;4)-beta-D-Xyl)-L-seryl-[protein] + UDP + H(+). It functions in the pathway glycan metabolism; heparan sulfate biosynthesis. In terms of biological role, glycosyltransferase which regulates the biosynthesis of heparan sulfate (HS). Initiates HS synthesis by transferring the first N-acetyl-alpha-D-glucosamine (alpha-GlcNAc) residue (GlcNAcT-I activity) to the tetrasaccharide linker (GlcA-Gal-Gal-Xyl-)Ser core linker. May also transfer alpha-GlcNAc residues during HS elongation (GlcNAcT-II activity). Lacks glucuronyl transferase II (GlcAT-II) activity. Important for both skeletal development and hematopoiesis, through the formation of HS proteoglycans (HSPGs). Through the synthesis of HS, regulates postnatal pancreatic islet maturation and insulin secretion. Receptor for REG3A, REG3B and REG3G, induces the activation of downstream signaling pathways such as PI3K-AKT or RAS-RAF-MEK-ERK signaling pathway. Required for the function of REG3A in regulating keratinocyte proliferation and differentiation. Required for the inhibition of skin inflammation mediated by REG3A through the activation of PI3K-AKT-STAT3 pathway. Required for the function of REG3A and REG3G in glucose tolerance in pancreas. Expressed in microglia, is activated by nociceptor-derived REG3G in response to endotoxins, leading to the inhibition of kynurenine pathway to prevent endotoxic death. The protein is Exostosin-like 3 of Homo sapiens (Human).